The sequence spans 228 residues: MLEELKQAVLEANLQLPQYRLVTFTWGNVSGIDRERGLVVIKPSGVAYDKLTIDDMVVVDLTGNVVEGDLKPSSDTPTHLWLYKQFPGIGGIVHTHSTWATVWAQAGKGIPALGTTHADYFYGEIPCTRPMTNEEIQGAYELETGKVITETFRFLDPLQMPGVLVHGHGPFAWGKDPANAVHNAVVLEEVAKMAARTYMLNPNAKPISQTLLDRHYLRKHGANAYYGQ.

Substrate contacts are provided by residues 27–28 (GN), 44–45 (SG), and 73–74 (SS). The Zn(2+) site is built by Asp75, His94, and His96. Asp119 serves as the catalytic Proton donor/acceptor. His168 serves as a coordination point for Zn(2+). Tyr226 serves as the catalytic Proton donor/acceptor.

Belongs to the aldolase class II family. AraD/FucA subfamily. Zn(2+) serves as cofactor.

It carries out the reaction L-ribulose 5-phosphate = D-xylulose 5-phosphate. Its pathway is carbohydrate degradation; L-arabinose degradation via L-ribulose; D-xylulose 5-phosphate from L-arabinose (bacterial route): step 3/3. Its function is as follows. Involved in the degradation of L-arabinose. Catalyzes the interconversion of L-ribulose 5-phosphate (LRu5P) and D-xylulose 5-phosphate (D-Xu5P) via a retroaldol/aldol mechanism (carbon-carbon bond cleavage analogous to a class II aldolase reaction). This Geobacillus stearothermophilus (Bacillus stearothermophilus) protein is L-ribulose-5-phosphate 4-epimerase (araD).